Consider the following 199-residue polypeptide: Chaperone protein TorD (199 aa).

The protein belongs to the TorD/DmsD family. TorD subfamily.

The protein resides in the cytoplasm. Involved in the biogenesis of TorA. Acts on TorA before the insertion of the molybdenum cofactor and, as a result, probably favors a conformation of the apoenzyme that is competent for acquiring the cofactor. This is Chaperone protein TorD from Escherichia coli O81 (strain ED1a).